Here is a 249-residue protein sequence, read N- to C-terminus: MAEQTLSFVDCLTSRFPTVRVSVAQPRGEITLDVPVVEWCAVCKGLRDEFDFEQLSDLCGVDYLGYGNAEWDTTGVSAQGFSRGVAGKAVGRFAWGEFPSAGTNDGTQPWDVPQERFAVLAHLISYRHNRRLRVRCFASNDALPIVASLTDVWPGVNWFEREAFDLFGIVFEGHLDLRRILTDYGFIGHPFRKDFPLTGNVEVRYDEEKKRVVYVPVTSVEPRVSVPRVIRDDARFGAAAGESTHSETV.

The protein belongs to the complex I 30 kDa subunit family. NDH-1 is composed of 14 different subunits. Subunits NuoB, C, D, E, F, and G constitute the peripheral sector of the complex.

Its subcellular location is the cell inner membrane. The enzyme catalyses a quinone + NADH + 5 H(+)(in) = a quinol + NAD(+) + 4 H(+)(out). In terms of biological role, NDH-1 shuttles electrons from NADH, via FMN and iron-sulfur (Fe-S) centers, to quinones in the respiratory chain. The immediate electron acceptor for the enzyme in this species is believed to be ubiquinone. Couples the redox reaction to proton translocation (for every two electrons transferred, four hydrogen ions are translocated across the cytoplasmic membrane), and thus conserves the redox energy in a proton gradient. In Xylella fastidiosa (strain M12), this protein is NADH-quinone oxidoreductase subunit C.